We begin with the raw amino-acid sequence, 39 residues long: Photosystem II reaction center protein J (39 aa).

A helical transmembrane segment spans residues I7 to F27.

This sequence belongs to the PsbJ family. PSII is composed of 1 copy each of membrane proteins PsbA, PsbB, PsbC, PsbD, PsbE, PsbF, PsbH, PsbI, PsbJ, PsbK, PsbL, PsbM, PsbT, PsbX, PsbY, PsbZ, Psb30/Ycf12, peripheral proteins PsbO, CyanoQ (PsbQ), PsbU, PsbV and a large number of cofactors. It forms dimeric complexes.

The protein localises to the cellular thylakoid membrane. In terms of biological role, one of the components of the core complex of photosystem II (PSII). PSII is a light-driven water:plastoquinone oxidoreductase that uses light energy to abstract electrons from H(2)O, generating O(2) and a proton gradient subsequently used for ATP formation. It consists of a core antenna complex that captures photons, and an electron transfer chain that converts photonic excitation into a charge separation. The sequence is that of Photosystem II reaction center protein J from Gloeothece citriformis (strain PCC 7424) (Cyanothece sp. (strain PCC 7424)).